The following is a 209-amino-acid chain: MESMDAKIVLLGAQGVGKTCFVTRYVNNKFQAGQASTIGASFSRKRVVVNDTTVRLQIWDTAGQERFRSMAPIYYRSASCGILCYDVTSRASFDAMHLWLLELKQNLSSDIIIHIVGTKVDLVKDEPSLREVPFEQCVEYASEWLQDDSCCHEISAKDDEGVEEVFEVIITKLLDKREADEQQKHNSQRQRQSVVYLHTDEDEQKSSCC.

12-19 (GAQGVGKT) serves as a coordination point for GTP. The Effector region motif lies at 34-42 (QASTIGASF). GTP contacts are provided by residues 60-64 (DTAGQ) and 118-121 (TKVD). 2 S-geranylgeranyl cysteine lipidation sites follow: Cys-208 and Cys-209.

It belongs to the small GTPase superfamily. Rab family.

The protein resides in the cell membrane. Protein transport. Probably involved in vesicular traffic. This Yarrowia lipolytica (strain CLIB 122 / E 150) (Yeast) protein is Ras-like GTP-binding protein RYL2 (RYL2).